Reading from the N-terminus, the 313-residue chain is Porphobilinogen deaminase (313 aa).

Position 242 is an S-(dipyrrolylmethanemethyl)cysteine (cysteine 242).

The protein belongs to the HMBS family. Monomer. Dipyrromethane is required as a cofactor.

It catalyses the reaction 4 porphobilinogen + H2O = hydroxymethylbilane + 4 NH4(+). Its pathway is porphyrin-containing compound metabolism; protoporphyrin-IX biosynthesis; coproporphyrinogen-III from 5-aminolevulinate: step 2/4. In terms of biological role, tetrapolymerization of the monopyrrole PBG into the hydroxymethylbilane pre-uroporphyrinogen in several discrete steps. In Pseudomonas putida (strain GB-1), this protein is Porphobilinogen deaminase.